A 134-amino-acid chain; its full sequence is Ribosome-binding factor A (134 aa).

The tract at residues 115–134 (EDQRQERGEIPPGSDELQPD) is disordered.

The protein belongs to the RbfA family. As to quaternary structure, monomer. Binds 30S ribosomal subunits, but not 50S ribosomal subunits or 70S ribosomes.

The protein resides in the cytoplasm. In terms of biological role, one of several proteins that assist in the late maturation steps of the functional core of the 30S ribosomal subunit. Associates with free 30S ribosomal subunits (but not with 30S subunits that are part of 70S ribosomes or polysomes). Required for efficient processing of 16S rRNA. May interact with the 5'-terminal helix region of 16S rRNA. The sequence is that of Ribosome-binding factor A from Synechococcus sp. (strain CC9902).